The following is a 291-amino-acid chain: Beta-lactamase CTX-M-1 (291 aa).

A signal peptide spans 1-28; sequence MVKKSLRQFTLMATATVTLLLGSVPLYA. The active-site Nucleophile; acyl-ester intermediate is Ser73. Residues Lys76, Ser133, Glu169, and Ser240 each contribute to the a beta-lactam site. The active-site Proton acceptor is the Glu169.

Belongs to the class-A beta-lactamase family. Monomer.

Its subcellular location is the secreted. The enzyme catalyses a beta-lactam + H2O = a substituted beta-amino acid. Inhibited by the beta-lactamase-blocking agent clavulanic acid; in the TG1 strain. In terms of biological role, extended-spectrum beta-lactamase (ESBL) which confers resistance to penicillins, as well as first, second and third-generation cephalosporins. Has cefotaxime-hydrolyzing activity. Inactive against the cephamycin antibiotic, cefoxitin, or against the carbapenem, imipenem. The sequence is that of Beta-lactamase CTX-M-1 from Escherichia coli.